Consider the following 520-residue polypeptide: General transcription factor 3C polypeptide 5 (520 aa).

At Ala-2 the chain carries N-acetylalanine. The disordered stretch occupies residues 466–520 (LFSNTGKADRGKEQLMFESGEEEEEEEEEEEEEEEDFKPSDGSENEMETEILDYV). Acidic residues-rich tracts occupy residues 484 to 501 (SGEEEEEEEEEEEEEEED) and 508 to 520 (SENEMETEILDYV).

This sequence belongs to the TFIIIC subunit 5 family. As to quaternary structure, part of the TFIIIC subcomplex TFIIIC2, consisting of six subunits, GTF3C1, GTF3C2, GTF3C3, GTF3C4, GTF3C5 and GTF3C6. Interacts with BRF1, GTF3C6 and TBP.

Its subcellular location is the nucleus. Functionally, involved in RNA polymerase III-mediated transcription. Integral, tightly associated component of the DNA-binding TFIIIC2 subcomplex that directly binds tRNA and virus-associated RNA promoters. This Mus musculus (Mouse) protein is General transcription factor 3C polypeptide 5 (Gtf3c5).